A 375-amino-acid polypeptide reads, in one-letter code: Alpha-2,8-sialyltransferase 8B (375 aa).

Residues 1-6 (MQLQFR) are Cytoplasmic-facing. Residues 7 to 23 (SWMLAALTLLVVFLIFA) traverse the membrane as a helical; Signal-anchor for type II membrane protein segment. Over 24–375 (DISEIEEEIG…LTVGQCDGAT (352 aa)) the chain is Lumenal. N-linked (GlcNAc...) asparagine glycans are attached at residues Asn-60, Asn-72, Asn-89, and Asn-134. 2 cysteine pairs are disulfide-bonded: Cys-157-Cys-307 and Cys-171-Cys-371. CMP-N-acetyl-beta-neuraminate is bound by residues Asn-162 and Asn-185. 2 N-linked (GlcNAc...) asparagine glycosylation sites follow: Asn-219 and Asn-234. The CMP-N-acetyl-beta-neuraminate site is built by Thr-294, Thr-295, Gly-296, Trp-316, Tyr-329, and His-330. Residue His-346 is the Proton donor/acceptor of the active site.

It belongs to the glycosyltransferase 29 family. Post-translationally, autopolysialylated. Autopolysialylation is not a prerequisite for the polysialylation acitity, but enhances the polysialylation acitity. In terms of tissue distribution, expressed only in newborn brain.

Its subcellular location is the golgi apparatus membrane. The protein localises to the secreted. It is found in the cell membrane. The catalysed reaction is [N-acetyl-alpha-D-neuraminosyl-(2-&gt;8)](n) + CMP-N-acetyl-beta-neuraminate = [N-acetyl-alpha-D-neuraminosyl-(2-&gt;8)](n+1) + CMP + H(+). The protein operates within protein modification; protein glycosylation. In terms of biological role, catalyzes the transfer of a sialic acid from a CMP-linked sialic acid donor onto a terminal alpha-2,3-, alpha-2,6-, or alpha-2,8-linked sialic acid of an N-linked glycan acceptor through alpha-2,8-linkages. Therefore, participates in polysialic acid synthesis on various sialylated N-acetyllactosaminyl oligosaccharides (alpha-2,3-, alpha-2,6-, or alpha-2,8-linked sialic acid), including NCAM1, NCAM1 N-glycans, FETUB N-glycans, and to a lesser extent sialylparagloboside (SPG) and AHSG, which does not require the initial addition of an alpha 2,8-sialic acid. However, does not exhibit sialic acid-polymerase activity. Catalyzes polysialic acid synthesis in the hippocampal on NCAM1 and supports neurite outgrowth. ST8SIA2-mediated polysialylation influences on oligodendrocyte differentiation and may promote the integrity of myelin and axons. The polypeptide is Alpha-2,8-sialyltransferase 8B (Rattus norvegicus (Rat)).